Here is a 1365-residue protein sequence, read N- to C-terminus: DNA-directed RNA polymerase subunit beta'' (1365 aa).

4 residues coordinate Zn(2+): Cys224, Cys295, Cys302, and Cys305.

Belongs to the RNA polymerase beta' chain family. RpoC2 subfamily. In terms of assembly, in plastids the minimal PEP RNA polymerase catalytic core is composed of four subunits: alpha, beta, beta', and beta''. When a (nuclear-encoded) sigma factor is associated with the core the holoenzyme is formed, which can initiate transcription. Requires Zn(2+) as cofactor.

The protein resides in the plastid. Its subcellular location is the chloroplast. The enzyme catalyses RNA(n) + a ribonucleoside 5'-triphosphate = RNA(n+1) + diphosphate. In terms of biological role, DNA-dependent RNA polymerase catalyzes the transcription of DNA into RNA using the four ribonucleoside triphosphates as substrates. The protein is DNA-directed RNA polymerase subunit beta'' of Fagopyrum esculentum subsp. ancestrale (Wild buckwheat).